The primary structure comprises 386 residues: Putative matrix metalloproteinase (386 aa).

Positions 1 to 34 (MPTAHFQHSIRYLNVTNMLIFSIISFLLIYQTNS) are cleaved as a signal peptide. 2 N-linked (GlcNAc...) asparagine; by host glycosylation sites follow: N14 and N58. Residue H186 coordinates Zn(2+). E187 is an active-site residue. Zn(2+) contacts are provided by H190 and H196. The disordered stretch occupies residues 235-258 (NEQSTHQSTRHRPHRRPSPDGSCR).

This sequence belongs to the peptidase M10A family. Requires Zn(2+) as cofactor.

In Spodoptera frugiperda (Fall armyworm), this protein is Putative matrix metalloproteinase.